A 636-amino-acid chain; its full sequence is Threonine--tRNA ligase (636 aa).

Positions 1–61 (MPVITLPDGS…TQDASLQLIT (61 aa)) constitute a TGS domain. The tract at residues 243–534 (DHRKIGKTLD…LIEEFTGKFP (292 aa)) is catalytic. Zn(2+) is bound by residues C334, H385, and H511.

Belongs to the class-II aminoacyl-tRNA synthetase family. As to quaternary structure, homodimer. Zn(2+) serves as cofactor.

The protein resides in the cytoplasm. The catalysed reaction is tRNA(Thr) + L-threonine + ATP = L-threonyl-tRNA(Thr) + AMP + diphosphate + H(+). Catalyzes the attachment of threonine to tRNA(Thr) in a two-step reaction: L-threonine is first activated by ATP to form Thr-AMP and then transferred to the acceptor end of tRNA(Thr). Also edits incorrectly charged L-seryl-tRNA(Thr). The protein is Threonine--tRNA ligase of Colwellia psychrerythraea (strain 34H / ATCC BAA-681) (Vibrio psychroerythus).